The primary structure comprises 251 residues: 2,3-bisphosphoglycerate-dependent phosphoglycerate mutase 2 (251 aa).

Residues R8–N15, T21–G22, R60, E87–Y90, K98, R114–R115, and G183–N184 each bind substrate. H9 (tele-phosphohistidine intermediate) is an active-site residue. E87 functions as the Proton donor/acceptor in the catalytic mechanism.

This sequence belongs to the phosphoglycerate mutase family. BPG-dependent PGAM subfamily. In terms of assembly, homodimer.

The catalysed reaction is (2R)-2-phosphoglycerate = (2R)-3-phosphoglycerate. It participates in carbohydrate degradation; glycolysis; pyruvate from D-glyceraldehyde 3-phosphate: step 3/5. In terms of biological role, catalyzes the interconversion of 2-phosphoglycerate and 3-phosphoglycerate. The chain is 2,3-bisphosphoglycerate-dependent phosphoglycerate mutase 2 from Nitrosospira multiformis (strain ATCC 25196 / NCIMB 11849 / C 71).